The primary structure comprises 77 residues: Large ribosomal subunit protein uL24 (77 aa).

The segment at 42-61 (KKHQKPSQTNANGGVVESEG) is disordered.

It belongs to the universal ribosomal protein uL24 family. In terms of assembly, part of the 50S ribosomal subunit.

One of two assembly initiator proteins, it binds directly to the 5'-end of the 23S rRNA, where it nucleates assembly of the 50S subunit. Its function is as follows. One of the proteins that surrounds the polypeptide exit tunnel on the outside of the subunit. The protein is Large ribosomal subunit protein uL24 of Lactobacillus helveticus (strain DPC 4571).